The chain runs to 240 residues: HTH-type transcriptional regulator Mce2R (240 aa).

Residues 9-77 (RSVPEEVFEQ…QGDVTTVRDF (69 aa)) enclose the HTH gntR-type domain. The segment at residues 37-56 (ERRLAELLGVSRPAVREALK) is a DNA-binding region (H-T-H motif).

In terms of biological role, negatively regulates the expression of its operon as well as expression of end (endonuclease 4). In Mycobacterium tuberculosis (strain CDC 1551 / Oshkosh), this protein is HTH-type transcriptional regulator Mce2R (mce2R).